The following is a 1685-amino-acid chain: Collagen alpha-5(IV) chain (1685 aa).

An N-terminal signal peptide occupies residues 1–26; it reads MKLRGVSLAAGLFLLALSLWGQPAEA. A nonhelical region (NC2) region spans residues 27-41; that stretch reads AACYGCSPGSKCDCS. The segment at 42 to 1456 is triple-helical region; the sequence is GIKGEKGERG…QGPPGPPGTS (1415 aa). The interval 49–1459 is disordered; that stretch reads ERGFPGLEGH…PGPPGTSSVA (1411 aa). The segment covering 52–61 has biased composition (low complexity); that stretch reads FPGLEGHPGL. Pro residues predominate over residues 62–73; sequence PGFPGPEGPPGP. A glycan (N-linked (GlcNAc...) asparagine) is linked at Asn-125. Positions 188 to 212 are enriched in pro residues; the sequence is TGIPGPIGPPGPPGLMGPPGPPGLP. Residues 214-225 are compositionally biased toward low complexity; that stretch reads PKGNMGLNFQGP. Residues 246 to 257 are compositionally biased toward basic and acidic residues; the sequence is EQKRPIDVEFQK. Pro residues predominate over residues 266 to 281; the sequence is RGPPGPPGIRGPPGPP. 2 stretches are compositionally biased toward basic and acidic residues: residues 284–305 and 324–333; these read EKGE…KDGE and PGRDGEKGQK. The span at 413 to 430 shows a compositional bias: low complexity; sequence PPGISIPGPPGLDGQPGA. 4 stretches are compositionally biased toward pro residues: residues 431–445, 493–505, 620–630, and 709–727; these read PGLP…PHIP, PGQP…PGPP, MGPPGFGPPGP, and PGPP…PGAP. A compositionally biased stretch (low complexity) spans 788–797; the sequence is RTGLDGLPGP. Pro residues-rich tracts occupy residues 848–859 and 868–880; these read PGPPGLDVPGPP and PGAP…PGSP. Composition is skewed to low complexity over residues 882-901, 912-931, 983-999, 1010-1026, and 1111-1120; these read LPGK…MGMM, IPGR…QGQP, YQGL…SGQP, NPGL…PGLK, and TPGAKGQPGL. Positions 1139-1148 are enriched in pro residues; it reads PGNPGLPGEP. 2 stretches are compositionally biased toward gly residues: residues 1149 to 1158 and 1202 to 1211; these read GPVGGGGHPG and GQKGDGGLPG. Composition is skewed to pro residues over residues 1234-1243 and 1256-1274; these read QGPPGPPGSP and PQGP…PPGL. Over residues 1295-1308 the composition is skewed to low complexity; that stretch reads LPGLKGDQGPPGLQ. A compositionally biased stretch (pro residues) spans 1353 to 1362; it reads IGPPGPPGLP. In terms of domain architecture, Collagen IV NC1 spans 1461–1685; it reads GFLITRHSQT…SRCQVCMKRT (225 aa). Intrachain disulfides connect Cys-1476-Cys-1567, Cys-1509-Cys-1564, Cys-1521-Cys-1527, Cys-1586-Cys-1681, Cys-1620-Cys-1678, and Cys-1632-Cys-1638. Met-1549 is covalently cross-linked (S-Lysyl-methionine sulfilimine (Met-Lys) (interchain with K-1667)). Residue Lys-1667 forms an S-Lysyl-methionine sulfilimine (Lys-Met) (interchain with M-1549) linkage.

The protein belongs to the type IV collagen family. There are six type IV collagen isoforms, alpha 1(IV)-alpha 6(IV), each of which can form a triple helix structure with 2 other chains to generate type IV collagen network. Post-translationally, prolines at the third position of the tripeptide repeating unit (G-X-Y) are hydroxylated in some or all of the chains. In terms of processing, type IV collagens contain numerous cysteine residues which are involved in inter- and intramolecular disulfide bonding. 12 of these, located in the NC1 domain, are conserved in all known type IV collagens. The trimeric structure of the NC1 domains is stabilized by covalent bonds between Lys and Met residues. In terms of tissue distribution, isoform 2 is found in kidney.

The protein resides in the secreted. The protein localises to the extracellular space. Its subcellular location is the extracellular matrix. It is found in the basement membrane. In terms of biological role, type IV collagen is the major structural component of glomerular basement membranes (GBM), forming a 'chicken-wire' meshwork together with laminins, proteoglycans and entactin/nidogen. The polypeptide is Collagen alpha-5(IV) chain (COL4A5) (Homo sapiens (Human)).